A 432-amino-acid chain; its full sequence is Glutamyl-tRNA reductase (432 aa).

Residues 50-53 (TCNR), Ser110, 115-117 (ETQ), and Gln121 each bind substrate. Cys51 (nucleophile) is an active-site residue. An NADP(+)-binding site is contributed by 190–195 (GAGEMG).

This sequence belongs to the glutamyl-tRNA reductase family. As to quaternary structure, homodimer.

It carries out the reaction (S)-4-amino-5-oxopentanoate + tRNA(Glu) + NADP(+) = L-glutamyl-tRNA(Glu) + NADPH + H(+). It functions in the pathway porphyrin-containing compound metabolism; protoporphyrin-IX biosynthesis; 5-aminolevulinate from L-glutamyl-tRNA(Glu): step 1/2. Catalyzes the NADPH-dependent reduction of glutamyl-tRNA(Glu) to glutamate 1-semialdehyde (GSA). The chain is Glutamyl-tRNA reductase from Nitratiruptor sp. (strain SB155-2).